A 158-amino-acid chain; its full sequence is UPF0262 protein Rsph17029_2283 (158 aa).

The protein belongs to the UPF0262 family.

The polypeptide is UPF0262 protein Rsph17029_2283 (Cereibacter sphaeroides (strain ATCC 17029 / ATH 2.4.9) (Rhodobacter sphaeroides)).